A 115-amino-acid chain; its full sequence is Parathyroid hormone (115 aa).

Residues Met1–Gly25 form the signal peptide. Positions Lys26–Arg31 are excised as a propeptide. Residues Arg51–Gly69 form an important for receptor binding region. Residues Glu76–Gly101 form a disordered region.

It belongs to the parathyroid hormone family. In terms of assembly, interacts with PTH1R (via N-terminal extracellular domain). As to expression, hypothalamus and parathyroid gland.

Its subcellular location is the secreted. Its function is as follows. Parathyroid hormone elevates calcium level by dissolving the salts in bone and preventing their renal excretion. Acts by binding to its receptor, PTH1R, activating G protein-coupled receptor signaling. Stimulates [1-14C]-2-deoxy-D-glucose (2DG) transport and glycogen synthesis in osteoblastic cells. This is Parathyroid hormone (Pth) from Rattus norvegicus (Rat).